We begin with the raw amino-acid sequence, 104 residues long: Large ribosomal subunit protein bL28 (104 aa).

The protein belongs to the bacterial ribosomal protein bL28 family.

This Wolbachia pipientis wMel protein is Large ribosomal subunit protein bL28.